A 582-amino-acid polypeptide reads, in one-letter code: ATP-dependent lipid A-core flippase (582 aa).

5 consecutive transmembrane segments (helical) span residues 16-36, 63-83, 153-173, 253-273, and 275-295; these read LWPT…ALIL, VLVW…ITSY, IIGL…ILIV, PIIQ…ASFP, and VMDN…IALM. The 283-residue stretch at 28-310 folds into the ABC transmembrane type-1 domain; it reads IVAGVALILN…LTNVNAQFQR (283 aa). An ABC transporter domain is found at 342–578; the sequence is VEFRNVTFTY…RGVYAQLHKM (237 aa). An ATP-binding site is contributed by 376–383; sequence GRSGSGKS.

The protein belongs to the ABC transporter superfamily. Lipid exporter (TC 3.A.1.106) family. As to quaternary structure, homodimer.

It is found in the cell inner membrane. The enzyme catalyses ATP + H2O + lipid A-core oligosaccharideSide 1 = ADP + phosphate + lipid A-core oligosaccharideSide 2.. Its function is as follows. Involved in lipopolysaccharide (LPS) biosynthesis. Translocates lipid A-core from the inner to the outer leaflet of the inner membrane. Transmembrane domains (TMD) form a pore in the inner membrane and the ATP-binding domain (NBD) is responsible for energy generation. The chain is ATP-dependent lipid A-core flippase from Shigella sonnei (strain Ss046).